The chain runs to 372 residues: MKYDLIIIGSGSVGAAAGYYATRAGLNVLMTDAHMPPHQHGSHHGDTRLIRHAYGEGEKYVPLVLRAQMLWDELSRHNEDDPIFVRSGVINLGPADSAFLANVAHSAEQWQLNVEKLDAQGIMARWPEIRVPDNYIGLFETDSGFLRSELAIKTWIQLAKEAGCAQLFNCPVTAIRHDDDGVTIETADGEYQAKKAIVCAGTWVKDLLPELPVLPVRKVFAWYQADGRYSVKNKFPAFTGELPNGDQYYGFPAENDALKIGKHNGGQVIHSADERVPFAEVVSDGSEAFPFLRNVLPGIGCCLYGAACTYDNSPDEDFIIDTLPGHDNTLLITGLSGHGFKFASVLGEIAADFAQDKKSDFDLTPFRLSRFQ.

FAD is bound at residue 4–34; sequence DLIIIGSGSVGAAAGYYATRAGLNVLMTDAH. Cys308 bears the S-8alpha-FAD cysteine mark.

The protein belongs to the MSOX/MTOX family. MTOX subfamily. Monomer. FAD is required as a cofactor.

The enzyme catalyses N(alpha)-methyl-L-tryptophan + O2 + H2O = L-tryptophan + formaldehyde + H2O2. Functionally, catalyzes the oxidative demethylation of N-methyl-L-tryptophan. In Escherichia coli O127:H6 (strain E2348/69 / EPEC), this protein is N-methyl-L-tryptophan oxidase.